The primary structure comprises 289 residues: ATP synthase gamma chain (289 aa).

The protein belongs to the ATPase gamma chain family. In terms of assembly, F-type ATPases have 2 components, CF(1) - the catalytic core - and CF(0) - the membrane proton channel. CF(1) has five subunits: alpha(3), beta(3), gamma(1), delta(1), epsilon(1). CF(0) has three main subunits: a, b and c.

The protein localises to the cell inner membrane. Its function is as follows. Produces ATP from ADP in the presence of a proton gradient across the membrane. The gamma chain is believed to be important in regulating ATPase activity and the flow of protons through the CF(0) complex. The chain is ATP synthase gamma chain from Polynucleobacter necessarius subsp. necessarius (strain STIR1).